Consider the following 279-residue polypeptide: Putative pyruvate, phosphate dikinase regulatory protein (279 aa).

154–161 lines the ADP pocket; the sequence is GVSRTSKT.

Belongs to the pyruvate, phosphate/water dikinase regulatory protein family. PDRP subfamily.

It carries out the reaction N(tele)-phospho-L-histidyl/L-threonyl-[pyruvate, phosphate dikinase] + ADP = N(tele)-phospho-L-histidyl/O-phospho-L-threonyl-[pyruvate, phosphate dikinase] + AMP + H(+). The enzyme catalyses N(tele)-phospho-L-histidyl/O-phospho-L-threonyl-[pyruvate, phosphate dikinase] + phosphate + H(+) = N(tele)-phospho-L-histidyl/L-threonyl-[pyruvate, phosphate dikinase] + diphosphate. Bifunctional serine/threonine kinase and phosphorylase involved in the regulation of the pyruvate, phosphate dikinase (PPDK) by catalyzing its phosphorylation/dephosphorylation. This is Putative pyruvate, phosphate dikinase regulatory protein from Rhodopseudomonas palustris (strain BisB18).